A 1915-amino-acid polypeptide reads, in one-letter code: MILKSFLLGNLLSLCMKIINSVVVVGLYYGFLTTFSIGPSYLFLLRARVMEEGTEKEVSATTGFITGQLMMFISIYYAPLHLALGRPHTITVLVLPYLLFHFFWHNHKYFLNINYGSTIRNSIRNLNIQCVFLNNLIFPLFNHFILPSSTLARLINIYMFQCNNKMLFVTSSFVGWLIGHILFMKWVELVLIWIRQNHFFRSNALFIRSNVLIVPKKNLVPELRNSMARIFSILLFITCIYYLGRMPSTLVTKKMKETSKMKQMGQSEEETDVEIETTSETKETKEEQEGSTEEDPSPSLYSEEKEDPDKIDETEEIRVNGNEKSKDEFHFRFKKTCYKYKNSPVFQNFYLDGNQENSKLEILKYEKKNLFWFQKPLVTLLFDYKRWNRPLRYIKNNQLENAVRNEMSQYFFYTCQSDGKQRISFTYPPSLSTFWEMIQRKMSLYTTEKLSPEELYNHWVYTNEQKRNNVSKEFINRIEALDKGSLTLDVLEKRTRLCNDKTEQQCLPKVYDPFLNGPYRGTIKKVSSSSIMNDYLITSIENSIEKLWINKIHGILPTDYREFEQKEKIDTFDGKSLSTDIFHFLTPISKFAGESTTSLNWKGLPLLAEQERNYSKDQAKYLKFLFAAVTTDPNNQIIRNKSIVINEICKKVPRWSYKLIDDLEQQEGEYEEESAEDHQIRSRKAKRVVIFTDNEPDTNTHTNTNNTSDRDEVEEVALIRYSQQPDFRRDIIKGSMRAQRRKIVIWELFQANVHSPLFLDKIDKTFFFSFDISEMTKFIFRNCMGKNTKLKTSDPEEKEKKEKKEENERIAVAETWDSILFAQPIRGSMLVTQSILRKYIVLPLLIIAKNTARILLFQFPEWFEDWEEWNREIHVKCTYNGVPLSETEFPRNWLKDGIQIKILFPLCLKPWHRFKLRSHHRGPMKKKGKKYNFCFLTVWGMETELPFGSPRNQPSFFEPILKELEKKIRKVKNQFFRILRVVKERTKWFLTVLKEKKRWVIEIILFIKRIMKELAKINPILLFGLKEVYESSENKNRKNSQNSITIISNQIIHESPIRIRSTDWTNYYYSLTEKKMKNLADRTSTIRNQIERITKDKKKIFLTPEINISPKKMSCGDKRSESLKSFWEIVKKRSIRLIRKWHFFLKFVIEKIYLLCIINIPRINAQLFLESTKKILDKYIYNYNDETNQEEIDEINQKKIHFISTIKKSLFHISNNNSQIFCDLSSLSQAYVFYKLSQTKVINKYHLRSVLEYHERSLFLKDRIKDYFRTQGIFHFESRHKKLRNSGMNDWKNWLKGHYQYQYDLSQTRWARLVPQKWQNRVNQRRTTQNKDSKKLGSYEKDQLIHYQKQNDYAVELLSNKKEKLKKHYGYDLLSHKYINYENKKDLYIYRSPLQVNEGREITYNYTTHKLESFCVLGGIPIRDYLGEDYIIETDKNPDRKYFDWGILHFCLRKEVDIDTWTNMDTEASINKKTKTGTNYSQIVEKINKKDLFMIHEEINPSNQKKKPFDWMGMNEEILNRTISNLELWFVPEFLLLYDTYKMKPWGIPIKLLLVNLNGNENVSENKNINRKQKKNLPLSSNKNKKKSLELENRNQEEKESSSQGDLGSNAQNQGNLGPNAQNQGNLGSVLPNQQKNLEEDYAGSDIKKVRKKKQFKSKAEVELDLLLKKYLLFQLRWNGSLNQRILNNIKIYCFLLRLINPKEITISSIQKGEMSLGIMLIKRDLTFTELIKRGIFIIEPVRLSIKWDGQFIMYQTIGISLVHKSKHQTNQRYREKRCIDKNHFEGFIARHENMLGNGDENHYDLLVPENISSPRRRRELRILTCFHFLNGNVLDRNPVFCNGNNVKNCGQFLNEDKHLDRDTNKLINMKLKFFLWPNYRLEDLACMNRYWFDTNNGSRFSMSRIHMYPRLKIS.

6 helical membrane passes run 18–38, 64–84, 90–110, 126–146, 174–194, and 230–250; these read IINSVVVVGLYYGFLTTFSIG, FITGQLMMFISIYYAPLHLAL, ITVLVLPYLLFHFFWHNHKYF, LNIQCVFLNNLIFPLFNHFIL, VGWLIGHILFMKWVELVLIWI, and IFSILLFITCIYYLGRMPSTL. Disordered regions lie at residues 260-319 and 1566-1631; these read KMKQ…EIRV and NKNI…GSVL. Residues 267–277 show a composition bias toward acidic residues; that stretch reads SEEETDVEIET. The span at 279–288 shows a compositional bias: basic and acidic residues; sequence SETKETKEEQ. The span at 304–315 shows a compositional bias: acidic residues; sequence EKEDPDKIDETE. A compositionally biased stretch (basic and acidic residues) spans 1587–1601; sequence KSLELENRNQEEKES. A compositionally biased stretch (polar residues) spans 1602–1631; it reads SSQGDLGSNAQNQGNLGPNAQNQGNLGSVL.

It belongs to the TIC214 family. As to quaternary structure, part of the Tic complex.

The protein resides in the plastid. It is found in the chloroplast inner membrane. Involved in protein precursor import into chloroplasts. May be part of an intermediate translocation complex acting as a protein-conducting channel at the inner envelope. The polypeptide is Protein TIC 214 (Platanus occidentalis (Sycamore)).